Here is a 145-residue protein sequence, read N- to C-terminus: D-aminoacyl-tRNA deacylase (145 aa).

The Gly-cisPro motif, important for rejection of L-amino acids signature appears at 137–138 (GP).

The protein belongs to the DTD family. In terms of assembly, homodimer.

Its subcellular location is the cytoplasm. The catalysed reaction is glycyl-tRNA(Ala) + H2O = tRNA(Ala) + glycine + H(+). The enzyme catalyses a D-aminoacyl-tRNA + H2O = a tRNA + a D-alpha-amino acid + H(+). An aminoacyl-tRNA editing enzyme that deacylates mischarged D-aminoacyl-tRNAs. Also deacylates mischarged glycyl-tRNA(Ala), protecting cells against glycine mischarging by AlaRS. Acts via tRNA-based rather than protein-based catalysis; rejects L-amino acids rather than detecting D-amino acids in the active site. By recycling D-aminoacyl-tRNA to D-amino acids and free tRNA molecules, this enzyme counteracts the toxicity associated with the formation of D-aminoacyl-tRNA entities in vivo and helps enforce protein L-homochirality. This is D-aminoacyl-tRNA deacylase from Alteromonas mediterranea (strain DSM 17117 / CIP 110805 / LMG 28347 / Deep ecotype).